The primary structure comprises 488 residues: MNLEETMPLVFERSIPGRIGFSLPESDVPETKASDFFEEAYLRSTPADLPELSELEIMRHYTNLSNHNFGVDSGFYPLGSCTMKYNPKINEKVARFPGFANIHPNQPESSVQGALELLYDLQTSLVEITGMDEVTLQPAAGAHGEWTGLMLIRAFHEKNGDTKRTKVIIPDSAHGTNPASAAVAGFDVVTVKSNEKGLVDVADLKKVVGEDTAALMLTNPNTLGLFEKDIVEMAEIVHAAGGKLYYDGANLNAIMAKVRPGDMGFDVVHLNLHKTFTGPHGGGGPGSGPIGVKKELIPFLPTPVLTKKEDAYTFDYNYPDSIGRVKPYYGNFGINVRAYTYIRTMGPDGLKLVTEYAVLNANYMMRKLQAAYDLPFDQVCKHEFVLSGNRQKKLGVRTIDIAKRLLDHNFHPPTVYFPLIVGEAIMIEPTETESKETLDSFIDTMLKIAKEAEENPEIVQEAPHSTYVKRLDETRAARKPVLRYQKEV.

Lys274 is modified (N6-(pyridoxal phosphate)lysine).

The protein belongs to the GcvP family. C-terminal subunit subfamily. In terms of assembly, the glycine cleavage system is composed of four proteins: P, T, L and H. In this organism, the P 'protein' is a heterodimer of two subunits. Pyridoxal 5'-phosphate serves as cofactor.

It carries out the reaction N(6)-[(R)-lipoyl]-L-lysyl-[glycine-cleavage complex H protein] + glycine + H(+) = N(6)-[(R)-S(8)-aminomethyldihydrolipoyl]-L-lysyl-[glycine-cleavage complex H protein] + CO2. In terms of biological role, the glycine cleavage system catalyzes the degradation of glycine. The P protein binds the alpha-amino group of glycine through its pyridoxal phosphate cofactor; CO(2) is released and the remaining methylamine moiety is then transferred to the lipoamide cofactor of the H protein. In Listeria welshimeri serovar 6b (strain ATCC 35897 / DSM 20650 / CCUG 15529 / CIP 8149 / NCTC 11857 / SLCC 5334 / V8), this protein is Probable glycine dehydrogenase (decarboxylating) subunit 2.